Reading from the N-terminus, the 1216-residue chain is Probable phospholipid-transporting ATPase 4 (1216 aa).

At M1–F74 the chain is on the cytoplasmic side. The chain crosses the membrane as a helical span at residues P75 to L96. Over S97 to P100 the chain is Extracellular. Residues L101–K123 traverse the membrane as a helical segment. Residues E124–I305 lie on the Cytoplasmic side of the membrane. Residues I306–E327 traverse the membrane as a helical segment. The Extracellular portion of the chain corresponds to T328–H359. Residues L360 to V377 traverse the membrane as a helical segment. Residues S378–A922 are Cytoplasmic-facing. Catalysis depends on D425, which acts as the 4-aspartylphosphate intermediate. K605 is covalently cross-linked (Glycyl lysine isopeptide (Lys-Gly) (interchain with G-Cter in ubiquitin)). Mg(2+)-binding residues include D867 and D871. Residues Q923–F942 traverse the membrane as a helical segment. The Extracellular segment spans residues E943–D956. A helical transmembrane segment spans residues Y957–V976. The Cytoplasmic segment spans residues F977–R1006. Residues I1007 to I1029 form a helical membrane-spanning segment. The Extracellular segment spans residues Y1030–D1042. A helical transmembrane segment spans residues M1043–T1065. Topologically, residues V1066–W1071 are cytoplasmic. Residues I1072 to G1092 traverse the membrane as a helical segment. The Extracellular portion of the chain corresponds to M1093–I1109. A helical membrane pass occupies residues L1110–H1134. The Cytoplasmic segment spans residues I1135–V1216. Residues L1195 to V1216 are disordered. Residues K1198 to V1216 show a composition bias toward polar residues.

It belongs to the cation transport ATPase (P-type) (TC 3.A.3) family. Type IV subfamily.

It is found in the membrane. The enzyme catalyses ATP + H2O + phospholipidSide 1 = ADP + phosphate + phospholipidSide 2.. Its function is as follows. Involved in transport of phospholipids. The sequence is that of Probable phospholipid-transporting ATPase 4 from Arabidopsis thaliana (Mouse-ear cress).